Consider the following 163-residue polypeptide: NADH-quinone oxidoreductase subunit I (163 aa).

4Fe-4S ferredoxin-type domains lie at 54-84 (LRRY…IDSA) and 94-123 (TRYD…ETHI). C64, C67, C70, C74, C103, C106, C109, and C113 together coordinate [4Fe-4S] cluster.

The protein belongs to the complex I 23 kDa subunit family. In terms of assembly, NDH-1 is composed of 14 different subunits. Subunits NuoA, H, J, K, L, M, N constitute the membrane sector of the complex. [4Fe-4S] cluster is required as a cofactor.

It is found in the cell inner membrane. It carries out the reaction a quinone + NADH + 5 H(+)(in) = a quinol + NAD(+) + 4 H(+)(out). NDH-1 shuttles electrons from NADH, via FMN and iron-sulfur (Fe-S) centers, to quinones in the respiratory chain. The immediate electron acceptor for the enzyme in this species is believed to be ubiquinone. Couples the redox reaction to proton translocation (for every two electrons transferred, four hydrogen ions are translocated across the cytoplasmic membrane), and thus conserves the redox energy in a proton gradient. The chain is NADH-quinone oxidoreductase subunit I from Xylella fastidiosa (strain 9a5c).